Reading from the N-terminus, the 36-residue chain is Protein YibY (36 aa).

This is Protein YibY from Escherichia coli (strain K12).